The following is a 316-amino-acid chain: Ribosomal RNA small subunit methyltransferase H (316 aa).

S-adenosyl-L-methionine-binding positions include serine 35–histidine 37, aspartate 55, phenylalanine 84, aspartate 105, and glutamine 112.

Belongs to the methyltransferase superfamily. RsmH family.

The protein localises to the cytoplasm. It catalyses the reaction cytidine(1402) in 16S rRNA + S-adenosyl-L-methionine = N(4)-methylcytidine(1402) in 16S rRNA + S-adenosyl-L-homocysteine + H(+). Functionally, specifically methylates the N4 position of cytidine in position 1402 (C1402) of 16S rRNA. This chain is Ribosomal RNA small subunit methyltransferase H, found in Streptococcus dysgalactiae subsp. equisimilis (strain GGS_124).